A 532-amino-acid chain; its full sequence is Cytochrome P450 monooxygenase pgmC (532 aa).

A helical membrane pass occupies residues 15–32 (ISTLAVLIGFIALLTAWL). Position 438 (C438) interacts with heme.

This sequence belongs to the cytochrome P450 family. Heme serves as cofactor.

The protein resides in the membrane. Its pathway is pigment biosynthesis. It functions in the pathway secondary metabolite biosynthesis. In terms of biological role, cytochrome P450 monooxygenase; part of the gene cluster that mediates the biosynthesis of pleosporalin A, ascomycone A, as well as a third cryptic naphthoquinone derived pigment, all responsible for the coloration of conidia. Involved in the oxidation of fusarubinaldehyde at C-9. PgmC has low substrate-specificity and is also able to use the pgmA product 3-acetonyl-1,6,8-trihydroxy-2-naphthaldehyde as a substrate. The pathway begins with the biosynthesis of the cyclized heptaketide 3-acetonyl-1,6,8-trihydroxy-2-naphthaldehyde by the NR-PKS pgmA. The C-6 hydroxyl group is further methylated by the O-methyltransferase pgmB to yield fusarubinaldehyde which is in turn oxidized by the cytochrome P450 monooxygenase pgmC at C-9. The C-1 hydroxyl group is then methylated spontaneously. Although pgmE, pgmD and pgmH are essential for the production of pleosporalin A, it is not the case for the 2 other final products and it remains difficult to assign a specific function to each enzyme. PgmF and pgmG seem not to be involved in pigment biosynthesis although they were regulated by the cluster-specific transcription factor pgmR. The protein is Cytochrome P450 monooxygenase pgmC of Aspergillus terreus (strain NIH 2624 / FGSC A1156).